The sequence spans 490 residues: Cytochrome P450 2C29 (490 aa).

Positions methionine 1–glycine 25 are cleaved as a signal peptide. An N6-acetyllysine mark is found at lysine 249, lysine 252, and lysine 375. Cysteine 435 lines the heme pocket.

This sequence belongs to the cytochrome P450 family. Heme is required as a cofactor. Expressed in liver as well as in extrahepatic tissues including brain, kidney, lung, heart, and intestine.

The protein localises to the endoplasmic reticulum membrane. It localises to the microsome membrane. The catalysed reaction is an organic molecule + reduced [NADPH--hemoprotein reductase] + O2 = an alcohol + oxidized [NADPH--hemoprotein reductase] + H2O + H(+). It catalyses the reaction (5Z,8Z,11Z,14Z)-eicosatetraenoate + reduced [NADPH--hemoprotein reductase] + O2 = 14,15-epoxy-(5Z,8Z,11Z)-eicosatrienoate + oxidized [NADPH--hemoprotein reductase] + H2O + H(+). The protein operates within lipid metabolism; arachidonate metabolism. Its function is as follows. A cytochrome P450 monooxygenase that selectively catalyzes the epoxidation of 14,15 double bond of (5Z,8Z,11Z,14Z)-eicosatetraenoic acid (arachidonate) forming 14,15-epoxyeicosatrienoic acid (14,15-EET) regioisomer. Mechanistically, uses molecular oxygen inserting one oxygen atom into a substrate, and reducing the second into a water molecule, with two electrons provided by NADPH via cytochrome P450 reductase (CPR; NADPH--hemoprotein reductase). In Mus musculus (Mouse), this protein is Cytochrome P450 2C29.